Consider the following 256-residue polypeptide: Imidazole glycerol phosphate synthase subunit HisF (256 aa).

Residues Asp-12 and Asp-131 contribute to the active site.

It belongs to the HisA/HisF family. Heterodimer of HisH and HisF.

The protein localises to the cytoplasm. It carries out the reaction 5-[(5-phospho-1-deoxy-D-ribulos-1-ylimino)methylamino]-1-(5-phospho-beta-D-ribosyl)imidazole-4-carboxamide + L-glutamine = D-erythro-1-(imidazol-4-yl)glycerol 3-phosphate + 5-amino-1-(5-phospho-beta-D-ribosyl)imidazole-4-carboxamide + L-glutamate + H(+). It participates in amino-acid biosynthesis; L-histidine biosynthesis; L-histidine from 5-phospho-alpha-D-ribose 1-diphosphate: step 5/9. Functionally, IGPS catalyzes the conversion of PRFAR and glutamine to IGP, AICAR and glutamate. The HisF subunit catalyzes the cyclization activity that produces IGP and AICAR from PRFAR using the ammonia provided by the HisH subunit. The polypeptide is Imidazole glycerol phosphate synthase subunit HisF (Pseudomonas putida (strain GB-1)).